We begin with the raw amino-acid sequence, 316 residues long: MSFASETKKELTNLEVKDCCAKAELSALIRMNGSLSFSNRKVVLDVQTENAAIARRIYTLLKKQYDVSVELLVRKKMRLKKNNVYIVRLIENAKPILEDLKILGDNFVIARNISEDLVKKRCCKRSYMRGAFLAGGSVNNPETSSYHLEIFSLYKEHNDSLCRLMNQFHLNSKTLERKKGYITYLKEAEKITEFLNVIGAHNSLLRFEDVRIVRDMRNSVNRLVNCETANLNKTIGASLRQVENIKLIDERIGLDALPEKLREIAQLRIDYQEVTLKELGEMVSSGKISKSGINHRLRKLDEIAEQLRSGQSVSLK.

A DNA-binding region (H-T-H motif) is located at residues 275–309 (TLKELGEMVSSGKISKSGINHRLRKLDEIAEQLRS).

Belongs to the WhiA family.

Its function is as follows. Involved in cell division and chromosome segregation. The polypeptide is Probable cell division protein WhiA (Bacillus licheniformis (strain ATCC 14580 / DSM 13 / JCM 2505 / CCUG 7422 / NBRC 12200 / NCIMB 9375 / NCTC 10341 / NRRL NRS-1264 / Gibson 46)).